Reading from the N-terminus, the 188-residue chain is Protein SSX3 (188 aa).

One can recognise a KRAB-related domain in the interval 20–83 (KIQKAFDDIA…KRVTDFQGND (64 aa)). The interval 113 to 162 (PKKPAEEGNVSKEVPEASGPQNDGKQLCPPGKPTTSEKINMISGPKRGEH) is disordered. The span at 115 to 127 (KPAEEGNVSKEVP) shows a compositional bias: basic and acidic residues. Phosphoserine is present on serine 123.

The protein belongs to the SSX family. In terms of assembly, interacts with SSX2IP.

In terms of biological role, could act as a modulator of transcription. In Homo sapiens (Human), this protein is Protein SSX3 (SSX3).